Here is a 49-residue protein sequence, read N- to C-terminus: Large ribosomal subunit protein bL33 (49 aa).

The protein belongs to the bacterial ribosomal protein bL33 family.

The protein is Large ribosomal subunit protein bL33 of Clostridium botulinum (strain Alaska E43 / Type E3).